The following is a 520-amino-acid chain: Peptide chain release factor 3 (520 aa).

Residues 8-277 (ESRKTFAIIS…HAPMPNARQT (270 aa)) enclose the tr-type G domain. GTP-binding positions include 17-24 (SHPDAGKT), 85-89 (DTPGH), and 139-142 (NKLD).

The protein belongs to the TRAFAC class translation factor GTPase superfamily. Classic translation factor GTPase family. PrfC subfamily.

It is found in the cytoplasm. Its function is as follows. Increases the formation of ribosomal termination complexes and stimulates activities of RF-1 and RF-2. It binds guanine nucleotides and has strong preference for UGA stop codons. It may interact directly with the ribosome. The stimulation of RF-1 and RF-2 is significantly reduced by GTP and GDP, but not by GMP. The protein is Peptide chain release factor 3 of Staphylococcus haemolyticus (strain JCSC1435).